A 124-amino-acid chain; its full sequence is Small ribosomal subunit protein uS12 (124 aa).

A 3-methylthioaspartic acid modification is found at aspartate 89. A disordered region spans residues serine 104–lysine 124. The segment covering asparagine 111–lysine 124 has biased composition (basic residues).

Belongs to the universal ribosomal protein uS12 family. In terms of assembly, part of the 30S ribosomal subunit. Contacts proteins S8 and S17. May interact with IF1 in the 30S initiation complex.

With S4 and S5 plays an important role in translational accuracy. Its function is as follows. Interacts with and stabilizes bases of the 16S rRNA that are involved in tRNA selection in the A site and with the mRNA backbone. Located at the interface of the 30S and 50S subunits, it traverses the body of the 30S subunit contacting proteins on the other side and probably holding the rRNA structure together. The combined cluster of proteins S8, S12 and S17 appears to hold together the shoulder and platform of the 30S subunit. The chain is Small ribosomal subunit protein uS12 from Pelotomaculum thermopropionicum (strain DSM 13744 / JCM 10971 / SI).